A 257-amino-acid chain; its full sequence is Neurotrophin-3 (257 aa).

Positions 1-18 (MSILFYVIFLAYLRGIQG) are cleaved as a signal peptide. A propeptide spanning residues 19–138 (NNMDQRSLPE…VANRTSRRKR (120 aa)) is cleaved from the precursor. The segment at 61–81 (STLPKAEAPREPERGGPAKSA) is disordered. Over residues 67–76 (EAPREPERGG) the composition is skewed to basic and acidic residues. Asn131 carries an N-linked (GlcNAc...) asparagine glycan. Intrachain disulfides connect Cys152-Cys217, Cys195-Cys246, and Cys205-Cys248.

This sequence belongs to the NGF-beta family. In terms of tissue distribution, brain and peripheral tissues.

The protein localises to the secreted. Seems to promote the survival of visceral and proprioceptive sensory neurons. This Homo sapiens (Human) protein is Neurotrophin-3 (NTF3).